Reading from the N-terminus, the 441-residue chain is Ribulose bisphosphate carboxylase large chain (441 aa).

Position 5 is an N6,N6,N6-trimethyllysine (Lys-5). The substrate site is built by Asn-114 and Thr-164. Lys-166 (proton acceptor) is an active-site residue. Residue Lys-168 participates in substrate binding. Residues Lys-192, Asp-194, and Glu-195 each contribute to the Mg(2+) site. Position 192 is an N6-carboxylysine (Lys-192). The Proton acceptor role is filled by His-285. Substrate is bound by residues Arg-286, His-318, and Ser-370.

The protein belongs to the RuBisCO large chain family. Type I subfamily. Heterohexadecamer of 8 large chains and 8 small chains; disulfide-linked. The disulfide link is formed within the large subunit homodimers. Mg(2+) is required as a cofactor. Post-translationally, the disulfide bond which can form in the large chain dimeric partners within the hexadecamer appears to be associated with oxidative stress and protein turnover.

It localises to the plastid. It is found in the chloroplast. It carries out the reaction 2 (2R)-3-phosphoglycerate + 2 H(+) = D-ribulose 1,5-bisphosphate + CO2 + H2O. It catalyses the reaction D-ribulose 1,5-bisphosphate + O2 = 2-phosphoglycolate + (2R)-3-phosphoglycerate + 2 H(+). Its function is as follows. RuBisCO catalyzes two reactions: the carboxylation of D-ribulose 1,5-bisphosphate, the primary event in carbon dioxide fixation, as well as the oxidative fragmentation of the pentose substrate in the photorespiration process. Both reactions occur simultaneously and in competition at the same active site. The polypeptide is Ribulose bisphosphate carboxylase large chain (Argyrochosma delicatula (Delicate cloak fern)).